Here is a 464-residue protein sequence, read N- to C-terminus: ATP synthase subunit beta (464 aa).

Residue 148-155 coordinates ATP; it reads GGAGVGKT.

The protein belongs to the ATPase alpha/beta chains family. As to quaternary structure, F-type ATPases have 2 components, CF(1) - the catalytic core - and CF(0) - the membrane proton channel. CF(1) has five subunits: alpha(3), beta(3), gamma(1), delta(1), epsilon(1). CF(0) has three main subunits: a(1), b(2) and c(9-12). The alpha and beta chains form an alternating ring which encloses part of the gamma chain. CF(1) is attached to CF(0) by a central stalk formed by the gamma and epsilon chains, while a peripheral stalk is formed by the delta and b chains.

It is found in the cell inner membrane. The catalysed reaction is ATP + H2O + 4 H(+)(in) = ADP + phosphate + 5 H(+)(out). In terms of biological role, produces ATP from ADP in the presence of a proton gradient across the membrane. The catalytic sites are hosted primarily by the beta subunits. This chain is ATP synthase subunit beta, found in Acinetobacter baumannii (strain AB0057).